The sequence spans 561 residues: Urocanate hydratase (561 aa).

NAD(+) contacts are provided by residues 52–53, glutamine 130, 176–178, glutamate 196, arginine 201, 242–243, 263–267, 273–274, and tyrosine 322; these read GG, GMG, NA, QTSAH, and YL. Cysteine 410 is an active-site residue. Glycine 492 is a binding site for NAD(+).

Belongs to the urocanase family. NAD(+) is required as a cofactor.

The protein resides in the cytoplasm. The catalysed reaction is 4-imidazolone-5-propanoate = trans-urocanate + H2O. Its pathway is amino-acid degradation; L-histidine degradation into L-glutamate; N-formimidoyl-L-glutamate from L-histidine: step 2/3. Its function is as follows. Catalyzes the conversion of urocanate to 4-imidazolone-5-propionate. In Citrobacter koseri (strain ATCC BAA-895 / CDC 4225-83 / SGSC4696), this protein is Urocanate hydratase.